The chain runs to 157 residues: Transcriptional regulator MraZ (157 aa).

2 consecutive SpoVT-AbrB domains span residues 7 to 52 (TYTM…AGGN) and 83 to 126 (SETL…EPER).

It belongs to the MraZ family. As to quaternary structure, forms oligomers.

The protein resides in the cytoplasm. It localises to the nucleoid. The protein is Transcriptional regulator MraZ of Xanthobacter autotrophicus (strain ATCC BAA-1158 / Py2).